A 234-amino-acid polypeptide reads, in one-letter code: Ubiquitin domain-containing protein 1 (234 aa).

The segment at 1-47 (MGGCVGTHHDSSGSLNENSDGTGVALGRNQPLKKDKPKWKSDYPMTD) is disordered. The span at 12–21 (SGSLNENSDG) shows a compositional bias: polar residues. Residues 32–41 (LKKDKPKWKS) show a composition bias toward basic and acidic residues. Residues 152–227 (CQLRLRLSTG…VQVIVSQPIP (76 aa)) enclose the Ubiquitin-like domain.

Functionally, may be involved in the regulation of cellular senescence through a positive feedback loop with TP53. The protein is Ubiquitin domain-containing protein 1 (ubtd1) of Xenopus laevis (African clawed frog).